We begin with the raw amino-acid sequence, 480 residues long: Cytochrome P450 724B1 (480 aa).

The chain crosses the membrane as a helical span at residues 6-26 (LVLAALVILLALLLTLVLSHF). C426 provides a ligand contact to heme.

Belongs to the cytochrome P450 family. It depends on heme as a cofactor. As to expression, ubiquitously expressed at low levels, but preferentially in the internodes and the florets before flowering.

The protein resides in the membrane. The catalysed reaction is campesterol + reduced [NADPH--hemoprotein reductase] + O2 = (22S)-22-hydroxycampesterol + oxidized [NADPH--hemoprotein reductase] + H2O + H(+). The protein operates within plant hormone biosynthesis; brassinosteroid biosynthesis. Functionally, involved in brassinosteroid biosynthesis. May catalyze a C6-oxidation step and may be involved to supply 6-deoxotyphasterol and typhasterol. Involved in internode elongation and seed development. Catalyzes the conversion of campesterol (CR) to (22S)-22-hydroxycampesterol (22-OHCR, 22-hydroxyCR). This Oryza sativa subsp. japonica (Rice) protein is Cytochrome P450 724B1.